Here is a 261-residue protein sequence, read N- to C-terminus: Indole-3-glycerol phosphate synthase (261 aa).

It belongs to the TrpC family.

It catalyses the reaction 1-(2-carboxyphenylamino)-1-deoxy-D-ribulose 5-phosphate + H(+) = (1S,2R)-1-C-(indol-3-yl)glycerol 3-phosphate + CO2 + H2O. The protein operates within amino-acid biosynthesis; L-tryptophan biosynthesis; L-tryptophan from chorismate: step 4/5. The polypeptide is Indole-3-glycerol phosphate synthase (Campylobacter hominis (strain ATCC BAA-381 / DSM 21671 / CCUG 45161 / LMG 19568 / NCTC 13146 / CH001A)).